Reading from the N-terminus, the 305-residue chain is ATP synthase gamma chain (305 aa).

The protein belongs to the ATPase gamma chain family. As to quaternary structure, F-type ATPases have 2 components, CF(1) - the catalytic core - and CF(0) - the membrane proton channel. CF(1) has five subunits: alpha(3), beta(3), gamma(1), delta(1), epsilon(1). CF(0) has three main subunits: a, b and c.

Its subcellular location is the cell membrane. In terms of biological role, produces ATP from ADP in the presence of a proton gradient across the membrane. The gamma chain is believed to be important in regulating ATPase activity and the flow of protons through the CF(0) complex. The polypeptide is ATP synthase gamma chain (Streptomyces avermitilis (strain ATCC 31267 / DSM 46492 / JCM 5070 / NBRC 14893 / NCIMB 12804 / NRRL 8165 / MA-4680)).